Consider the following 90-residue polypeptide: DNA-binding protein HU-alpha (90 aa).

Belongs to the bacterial histone-like protein family. As to quaternary structure, heterodimer of an alpha and a beta chain.

Functionally, histone-like DNA-binding protein which is capable of wrapping DNA to stabilize it, and thus to prevent its denaturation under extreme environmental conditions. The chain is DNA-binding protein HU-alpha (hupA) from Pseudomonas aeruginosa (strain ATCC 15692 / DSM 22644 / CIP 104116 / JCM 14847 / LMG 12228 / 1C / PRS 101 / PAO1).